Here is a 500-residue protein sequence, read N- to C-terminus: FAD-linked oxidoreductase chyH (500 aa).

An N-terminal signal peptide occupies residues 1–20 (MRLQAVTAVAAWAVASACQS). An FAD-binding PCMH-type domain is found at 65-235 (LEVPTVNIVI…TSVTSKTYDI (171 aa)). N199, N266, N275, and N383 each carry an N-linked (GlcNAc...) asparagine glycan.

The protein belongs to the oxygen-dependent FAD-linked oxidoreductase family. It depends on FAD as a cofactor.

Its pathway is pigment biosynthesis. Its function is as follows. FAD-linked oxidoreductase; part of the gene cluster that mediates the biosynthesis of the yellow pigment chrysogine. the NRPS chyA mediates the condensation of anthranilic acid and alanine into the intermediate 2-(2-aminopropanamido)benzoic acid. The remainder of the pathway is highly branched yielding at least 13 chrysogine-related compounds. The malonyl transferase chyE converts 2-(2-aminopropanamido)benzoic acid and 2-(2-aminopropanamido)benzamidine into 2-(2-(2-carboxyacetamido)propanamido)benzoic acid and 3-((1-((2-carbamoylphenyl)amino)-1-oxopropan-2-yl)amino)-3-oxopropanoic acid, respectively. ChyD is an amidase, being responsible for the amidation of the carboxylic acid moiety of 2-(2-aminopropanamido)benzoic acid, 2-(2-(2-carboxyacetamido)propanamido)benzoic acid and 2-(2-((4-amino-1-carboxy-4-oxobutyl)amino)propanamido)benzoic acid. ChyC is involved in the same reactions as ChyD, but plays a more minor role in the amidation reactions compared to chyD. The oxidoreductases chyH and chyM are involved in oxidation reactions that form N-pyruvoylanthranilamide from 2-(2-aminopropanamido)benzamidine and (1-((2-carbamoylphenyl)amino)-1-oxopropan-2-yl)glutamine, respectively. N-pyruvoylanthranilamide is further converted via two further branches in the pathway, yielding chrysogine and additional chrysogine-related coumpounds. Chrysogine is likely formed by a spontaneous ring closure from N-pyruvoylanthranilamide. This is FAD-linked oxidoreductase chyH from Penicillium rubens (strain ATCC 28089 / DSM 1075 / NRRL 1951 / Wisconsin 54-1255) (Penicillium chrysogenum).